The chain runs to 260 residues: Glutathione S-transferase domain-containing protein DDB_G0280881 (260 aa).

In terms of domain architecture, GST N-terminal spans 7–96 (KVDFIFYTNG…YLAQKYNTFL (90 aa)). The GST C-terminal domain maps to 102-228 (NPKENSDVIT…QQISEGFKNF (127 aa)).

This sequence belongs to the GST superfamily.

This Dictyostelium discoideum (Social amoeba) protein is Glutathione S-transferase domain-containing protein DDB_G0280881.